The chain runs to 269 residues: Formamidopyrimidine-DNA glycosylase (269 aa).

The active-site Schiff-base intermediate with DNA is Pro-2. Glu-3 acts as the Proton donor in catalysis. The active-site Proton donor; for beta-elimination activity is Lys-57. His-90, Arg-109, and Lys-150 together coordinate DNA. An FPG-type zinc finger spans residues 235-269; it reads QVYGRKGEPCRVCGTPIVATKHAQRATFYCRHCQK. Arg-259 serves as the catalytic Proton donor; for delta-elimination activity.

The protein belongs to the FPG family. In terms of assembly, monomer. It depends on Zn(2+) as a cofactor.

It carries out the reaction Hydrolysis of DNA containing ring-opened 7-methylguanine residues, releasing 2,6-diamino-4-hydroxy-5-(N-methyl)formamidopyrimidine.. The catalysed reaction is 2'-deoxyribonucleotide-(2'-deoxyribose 5'-phosphate)-2'-deoxyribonucleotide-DNA = a 3'-end 2'-deoxyribonucleotide-(2,3-dehydro-2,3-deoxyribose 5'-phosphate)-DNA + a 5'-end 5'-phospho-2'-deoxyribonucleoside-DNA + H(+). Its function is as follows. Involved in base excision repair of DNA damaged by oxidation or by mutagenic agents. Acts as a DNA glycosylase that recognizes and removes damaged bases. Has a preference for oxidized purines, such as 7,8-dihydro-8-oxoguanine (8-oxoG). Has AP (apurinic/apyrimidinic) lyase activity and introduces nicks in the DNA strand. Cleaves the DNA backbone by beta-delta elimination to generate a single-strand break at the site of the removed base with both 3'- and 5'-phosphates. The chain is Formamidopyrimidine-DNA glycosylase from Salmonella heidelberg (strain SL476).